A 301-amino-acid polypeptide reads, in one-letter code: Probable alpha-L-glutamate ligase (301 aa).

An ATP-grasp domain is found at 104 to 287; sequence LQLLSRRGIG…VAGMIIEHLE (184 aa). ATP-binding positions include Lys141, 178–179, Asp187, and 211–213; these read EY and RSN. 3 residues coordinate Mg(2+): Asp248, Glu260, and Asn262. 3 residues coordinate Mn(2+): Asp248, Glu260, and Asn262.

This sequence belongs to the RimK family. Requires Mg(2+) as cofactor. Mn(2+) serves as cofactor.

This chain is Probable alpha-L-glutamate ligase, found in Pseudomonas putida (strain W619).